A 429-amino-acid chain; its full sequence is 3-phosphoshikimate 1-carboxyvinyltransferase (429 aa).

3-phosphoshikimate is bound by residues Lys-23, Ser-24, and Arg-28. Lys-23 serves as a coordination point for phosphoenolpyruvate. Positions 95 and 123 each coordinate phosphoenolpyruvate. Ser-168, Gln-170, Asp-316, and Lys-343 together coordinate 3-phosphoshikimate. Gln-170 provides a ligand contact to phosphoenolpyruvate. Residue Asp-316 is the Proton acceptor of the active site. Phosphoenolpyruvate-binding residues include Arg-347 and Arg-389.

It belongs to the EPSP synthase family. In terms of assembly, monomer.

It is found in the cytoplasm. The catalysed reaction is 3-phosphoshikimate + phosphoenolpyruvate = 5-O-(1-carboxyvinyl)-3-phosphoshikimate + phosphate. Its pathway is metabolic intermediate biosynthesis; chorismate biosynthesis; chorismate from D-erythrose 4-phosphate and phosphoenolpyruvate: step 6/7. In terms of biological role, catalyzes the transfer of the enolpyruvyl moiety of phosphoenolpyruvate (PEP) to the 5-hydroxyl of shikimate-3-phosphate (S3P) to produce enolpyruvyl shikimate-3-phosphate and inorganic phosphate. The sequence is that of 3-phosphoshikimate 1-carboxyvinyltransferase from Oceanobacillus iheyensis (strain DSM 14371 / CIP 107618 / JCM 11309 / KCTC 3954 / HTE831).